Consider the following 269-residue polypeptide: Calretinin (269 aa).

6 EF-hand domains span residues 14-49 (LSAS…LESA), 61-96 (SLGD…EENF), 105-140 (GSSS…LLKK), 149-184 (KLQE…QENF), 193-228 (LSSE…LYEK), and 230-265 (KKEM…VLCS). Residues Asp-27, Asp-29, Asn-31, Tyr-33, Glu-38, Asp-74, Asn-76, Asp-78, Lys-80, Glu-85, Asp-118, Asp-120, Ser-122, Tyr-124, Glu-129, Asp-162, Asn-164, Asp-166, Lys-168, Glu-173, Asp-206, Asp-208, Ser-210, and Glu-217 each coordinate Ca(2+).

This sequence belongs to the calbindin family.

The protein localises to the synapse. Its subcellular location is the cell projection. It is found in the dendrite. Functionally, calcium-binding protein involved in calcium homeostasis and signal transduction. It plays a critical role in buffering intracellular calcium levels and modulating calcium-dependent signaling pathways. Predominantly expressed in specific neuronal populations, influences synaptic plasticity and neuronal excitability, contributing to learning and memory. During embryonic development, it facilitates neuronal differentiation and maturation. The chain is Calretinin (CALB2) from Gallus gallus (Chicken).